The chain runs to 271 residues: Glutamate racemase (271 aa).

Substrate contacts are provided by residues 10-11 (DS) and 42-43 (YG). Residue Cys74 is the Proton donor/acceptor of the active site. A substrate-binding site is contributed by 75 to 76 (NT). The active-site Proton donor/acceptor is the Cys189. Residue 190 to 191 (TH) participates in substrate binding.

Belongs to the aspartate/glutamate racemases family.

It catalyses the reaction L-glutamate = D-glutamate. It functions in the pathway cell wall biogenesis; peptidoglycan biosynthesis. Functionally, provides the (R)-glutamate required for cell wall biosynthesis. This Bartonella bacilliformis (strain ATCC 35685 / KC583 / Herrer 020/F12,63) protein is Glutamate racemase.